A 203-amino-acid polypeptide reads, in one-letter code: Transmembrane emp24 domain-containing protein (203 aa).

The signal sequence occupies residues 1–22; that stretch reads MASIRLLPSCIVLMFLARSSLC. Topologically, residues 23-170 are lumenal; it reads YFITIDAHGE…RSINDNTNSR (148 aa). The GOLD domain occupies 32–114; the sequence is EECFHDKVTS…PKVLKFSMDI (83 aa). Residues 171–191 form a helical membrane-spanning segment; sequence VVWWSFFESLVLVAMTLGQVY. The Cytoplasmic segment spans residues 192-203; that stretch reads YLKRFFEVRRVV.

It belongs to the EMP24/GP25L family.

The protein resides in the cytoplasmic vesicle membrane. Functionally, could have a role in the budding of coatomer-coated and other species of coated vesicles. The chain is Transmembrane emp24 domain-containing protein from Nematostella vectensis (Starlet sea anemone).